A 400-amino-acid polypeptide reads, in one-letter code: MIIKPKIRGFICTTTHPVGCEKNIQAQIEYTKQQGKIANGPKRVLVIGSSAGYGMSSRVAAAYGSDASTIGVFFEKPATEKKPGSAGWYNSAAFEKQAKADGLYAKSINGDAFSHEIKAKVVELIKQDLGQIDAIIYSVAAPVRKLPDTGEVIRSSLKPIGETYISTAIDTNKDVIINATVEPATEEEVADTVTVMGGQDWELWLSALGEAGVLAEGLKTVAYSYIGTELTWPIYWDGALGKAKIDLDRASTAIQAQLAPLNGEAYVSVQKSVVTQASSAIPVMPLYISMVFKIMKEKGLHEGCMEQIYRLFTSQLYKQDGSAPETDQARRIRLDDWELRDDVQQACKELWPKITTENLFELTDYKEYKEEFVQLFGFSIDGVDYDADVDTVVEFDCLSV.

NAD(+)-binding positions include 74–75, 111–112, and 139–140; these read FE, DA, and VA. Tyr225 contacts substrate. Catalysis depends on Tyr235, which acts as the Proton donor. Residues Lys244 and 273 to 275 each bind NAD(+); that span reads VVT.

It belongs to the TER reductase family. As to quaternary structure, monomer.

The catalysed reaction is a 2,3-saturated acyl-[ACP] + NAD(+) = a (2E)-enoyl-[ACP] + NADH + H(+). The protein operates within lipid metabolism; fatty acid biosynthesis. Its function is as follows. Involved in the final reduction of the elongation cycle of fatty acid synthesis (FAS II). Catalyzes the reduction of a carbon-carbon double bond in an enoyl moiety that is covalently linked to an acyl carrier protein (ACP). The polypeptide is Enoyl-[acyl-carrier-protein] reductase [NADH] (Psychromonas ingrahamii (strain DSM 17664 / CCUG 51855 / 37)).